The following is a 259-amino-acid chain: Global transcriptional regulator CodY (259 aa).

The interval 1–155 is GAF domain; the sequence is MNLLEKTRQL…SATVVGMEIL (155 aa). Positions 203–222 form a DNA-binding region, H-T-H motif; that stretch reads ASKIADRVGITRSVIVNALR.

Belongs to the CodY family.

The protein localises to the cytoplasm. In terms of biological role, DNA-binding global transcriptional regulator which is involved in the adaptive response to starvation and acts by directly or indirectly controlling the expression of numerous genes in response to nutrient availability. During rapid exponential growth, CodY is highly active and represses genes whose products allow adaptation to nutrient depletion. The protein is Global transcriptional regulator CodY of Exiguobacterium sp. (strain ATCC BAA-1283 / AT1b).